Consider the following 95-residue polypeptide: MNLKPLADRVIVKPSPAEEKTKGGLYIPDSGKEKPQHGEVVAVGPGKAADNGTVVAMEVQVGQKVLYGKYSGTEVTVDGEDYLIMRESDIFAIIG.

The segment covering 12–22 (VKPSPAEEKTK) has biased composition (basic and acidic residues). The interval 12-38 (VKPSPAEEKTKGGLYIPDSGKEKPQHG) is disordered.

The protein belongs to the GroES chaperonin family. In terms of assembly, heptamer of 7 subunits arranged in a ring. Interacts with the chaperonin GroEL.

It localises to the cytoplasm. Its function is as follows. Together with the chaperonin GroEL, plays an essential role in assisting protein folding. The GroEL-GroES system forms a nano-cage that allows encapsulation of the non-native substrate proteins and provides a physical environment optimized to promote and accelerate protein folding. GroES binds to the apical surface of the GroEL ring, thereby capping the opening of the GroEL channel. The sequence is that of Co-chaperonin GroES from Chloroherpeton thalassium (strain ATCC 35110 / GB-78).